A 151-amino-acid polypeptide reads, in one-letter code: Viral interleukin-17 (151 aa).

Residues 1–22 (MTFRKTSLVLLLLLSIDCIVKS) form the signal peptide. N-linked (GlcNAc...) asparagine; by host glycans are attached at residues asparagine 36, asparagine 53, and asparagine 64. 2 disulfide bridges follow: cysteine 90–cysteine 140 and cysteine 95–cysteine 142.

The protein belongs to the IL-17 family.

It localises to the secreted. This Saimiri sciureus (Common squirrel monkey) protein is Viral interleukin-17 (13).